The chain runs to 468 residues: Ribulose bisphosphate carboxylase large chain (468 aa).

K5 bears the N6,N6,N6-trimethyllysine mark. Residues N114 and T164 each coordinate substrate. K166 functions as the Proton acceptor in the catalytic mechanism. K168 provides a ligand contact to substrate. Residues K192, D194, and E195 each contribute to the Mg(2+) site. The residue at position 192 (K192) is an N6-carboxylysine. Catalysis depends on H285, which acts as the Proton acceptor. Positions 286, 318, and 370 each coordinate substrate.

The protein belongs to the RuBisCO large chain family. Type I subfamily. Heterohexadecamer of 8 large chains and 8 small chains; disulfide-linked. The disulfide link is formed within the large subunit homodimers. It depends on Mg(2+) as a cofactor. The disulfide bond which can form in the large chain dimeric partners within the hexadecamer appears to be associated with oxidative stress and protein turnover.

It localises to the plastid. The protein localises to the chloroplast. The enzyme catalyses 2 (2R)-3-phosphoglycerate + 2 H(+) = D-ribulose 1,5-bisphosphate + CO2 + H2O. The catalysed reaction is D-ribulose 1,5-bisphosphate + O2 = 2-phosphoglycolate + (2R)-3-phosphoglycerate + 2 H(+). Its function is as follows. RuBisCO catalyzes two reactions: the carboxylation of D-ribulose 1,5-bisphosphate, the primary event in carbon dioxide fixation, as well as the oxidative fragmentation of the pentose substrate in the photorespiration process. Both reactions occur simultaneously and in competition at the same active site. This Anthocercis viscosa (Sticky tailflower) protein is Ribulose bisphosphate carboxylase large chain.